Reading from the N-terminus, the 278-residue chain is MAMLSFERKYRVRGGTLIGGDLFDFWVGPFYVGFFGVAGFFFALLGVLLIVWGATIGPNAELQTYNIWQISIAPPDLSYGLGMAPMTEGGLWQIITICAIGAFVSWALREVEICRKLGIGFHIPFAFAFAIGAYLVLVVVRPILMGAWGHGFPYGILSHLDWVSNVGYQFLHFHYNPAHMLAITFFFTNCLALSMHGSLILSVTNPQKGEEVKTSEHENTFFRDIVGYSIGALAIHRLGLFLALSAVFWSAVCIVISGPFWTRGWPEWWNWWLELPLW.

A run of 3 helical transmembrane segments spans residues 33–56, 90–118, and 121–146; these read GFFGVAGFFFALLGVLLIVWGATI, GLWQIITICAIGAFVSWALREVEICRKLG, and FHIPFAFAFAIGAYLVLVVVRPILMG. The (7R,8Z)-bacteriochlorophyll b site is built by H159 and H179. Residues 176-205 traverse the membrane as a helical segment; the sequence is NPAHMLAITFFFTNCLALSMHGSLILSVTN. A Fe cation-binding site is contributed by H196. F222 is an a ubiquinone binding site. Residues 231-257 form a helical membrane-spanning segment; that stretch reads GALAIHRLGLFLALSAVFWSAVCIVIS. Residue H236 participates in Fe cation binding.

This sequence belongs to the reaction center PufL/M/PsbA/D family. In terms of assembly, reaction center is composed of four bacteriochlorophylls, two bacteriopheophytins, two ubiquinones, one iron, and two highly hydrophobic polypeptide chains (designated L and M).

Its subcellular location is the cellular chromatophore membrane. In terms of biological role, the reaction center is a membrane-bound complex that mediates the initial photochemical event in the electron transfer process of photosynthesis. The sequence is that of Reaction center protein L chain (pufL) from Allochromatium vinosum (strain ATCC 17899 / DSM 180 / NBRC 103801 / NCIMB 10441 / D) (Chromatium vinosum).